The following is a 561-amino-acid chain: Asparagine synthetase [glutamine-hydrolyzing] (561 aa).

The active-site For GATase activity is the Cys-2. The Glutamine amidotransferase type-2 domain maps to 2–191 (CGIWALFGSD…PGHYEVLDLK (190 aa)). L-glutamine-binding positions include 49 to 53 (RLAVV), 75 to 77 (NGE), and Asp-97. One can recognise an Asparagine synthetase domain in the interval 213 to 536 (HALYDSVEKL…PGRADWLTHY (324 aa)). ATP is bound by residues Leu-256, Ile-288, and 363–364 (SG). Lys-385 is subject to N6-acetyllysine. Phosphothreonine is present on Thr-545. A Phosphoserine modification is found at Ser-557.

The enzyme catalyses L-aspartate + L-glutamine + ATP + H2O = L-asparagine + L-glutamate + AMP + diphosphate + H(+). The protein operates within amino-acid biosynthesis; L-asparagine biosynthesis; L-asparagine from L-aspartate (L-Gln route): step 1/1. This chain is Asparagine synthetase [glutamine-hydrolyzing] (ASNS), found in Cricetulus griseus (Chinese hamster).